The following is a 460-amino-acid chain: tRNA modification GTPase MnmE (460 aa).

(6S)-5-formyl-5,6,7,8-tetrahydrofolate-binding residues include Arg25, Glu87, and Arg126. In terms of domain architecture, TrmE-type G spans 221-381 (GLKVAIVGRP…LETAIANLVQ (161 aa)). Asn231 lines the K(+) pocket. GTP contacts are provided by residues 231–236 (NVGKSS), 250–256 (TDLPGTT), and 275–278 (DTAG). Ser235 serves as a coordination point for Mg(2+). The K(+) site is built by Thr250, Leu252, and Thr255. Mg(2+) is bound at residue Thr256. Lys460 is a (6S)-5-formyl-5,6,7,8-tetrahydrofolate binding site.

This sequence belongs to the TRAFAC class TrmE-Era-EngA-EngB-Septin-like GTPase superfamily. TrmE GTPase family. As to quaternary structure, homodimer. Heterotetramer of two MnmE and two MnmG subunits. Requires K(+) as cofactor.

The protein localises to the cytoplasm. Functionally, exhibits a very high intrinsic GTPase hydrolysis rate. Involved in the addition of a carboxymethylaminomethyl (cmnm) group at the wobble position (U34) of certain tRNAs, forming tRNA-cmnm(5)s(2)U34. This chain is tRNA modification GTPase MnmE, found in Picosynechococcus sp. (strain ATCC 27264 / PCC 7002 / PR-6) (Agmenellum quadruplicatum).